The following is a 218-amino-acid chain: Hypoxanthine-guanine phosphoribosyltransferase (218 aa).

A2 carries the post-translational modification N-acetylalanine. K69 is a binding site for GMP. The residue at position 103 (K103) is an N6-acetyllysine. Residue K115 forms a Glycyl lysine isopeptide (Lys-Gly) (interchain with G-Cter in SUMO1); alternate linkage. A Glycyl lysine isopeptide (Lys-Gly) (interchain with G-Cter in SUMO2); alternate cross-link involves residue K115. GMP contacts are provided by residues 134–142, K166, 186–188, and D194; these read EDIIDTGKT and KFV. D138 (proton acceptor) is an active-site residue. A Phosphothreonine modification is found at T142. D194 is a binding site for Mg(2+).

It belongs to the purine/pyrimidine phosphoribosyltransferase family. In terms of assembly, homotetramer. The cofactor is Mg(2+).

It is found in the cytoplasm. It carries out the reaction IMP + diphosphate = hypoxanthine + 5-phospho-alpha-D-ribose 1-diphosphate. The catalysed reaction is GMP + diphosphate = guanine + 5-phospho-alpha-D-ribose 1-diphosphate. It functions in the pathway purine metabolism; IMP biosynthesis via salvage pathway; IMP from hypoxanthine: step 1/1. Converts guanine to guanosine monophosphate, and hypoxanthine to inosine monophosphate. Transfers the 5-phosphoribosyl group from 5-phosphoribosylpyrophosphate onto the purine. Plays a central role in the generation of purine nucleotides through the purine salvage pathway. The polypeptide is Hypoxanthine-guanine phosphoribosyltransferase (HPRT1) (Bos taurus (Bovine)).